Consider the following 462-residue polypeptide: GTPase Der (462 aa).

EngA-type G domains are found at residues 3–170 (ITIA…TSQK) and 201–372 (IKIA…FNSI). GTP contacts are provided by residues 9 to 16 (GRTNVGKS), 57 to 61 (DTPGI), 122 to 125 (NKIE), 207 to 214 (GKPNVGKS), 254 to 258 (DTAGI), and 319 to 322 (NKND). The KH-like domain maps to 373–457 (KKIHTSKITE…SIVLYFKSSK (85 aa)).

Belongs to the TRAFAC class TrmE-Era-EngA-EngB-Septin-like GTPase superfamily. EngA (Der) GTPase family. Associates with the 50S ribosomal subunit.

GTPase that plays an essential role in the late steps of ribosome biogenesis. This is GTPase Der from Buchnera aphidicola subsp. Baizongia pistaciae (strain Bp).